The chain runs to 424 residues: Protein shisa-9 (424 aa).

The first 23 residues, 1 to 23 (MRRVLRLLLGCFLTELCARMCRA), serve as a signal peptide directing secretion. Topologically, residues 24-149 (QERSGHGQLA…DPLHDPTKDK (126 aa)) are extracellular. N-linked (GlcNAc...) asparagine glycans are attached at residues N45, N89, and N116. A helical transmembrane segment spans residues 150–170 (TNLIVYIICGVVAVMVLVGIF). Residues 171-424 (TKLGLEKAHR…ITNSKTEVTV (254 aa)) are Cytoplasmic-facing. Disordered regions lie at residues 333–373 (PRAF…TWDP) and 389–424 (LGIAESGSCDPLGTRTQHFPPTQPYFITNSKTEVTV). 2 stretches are compositionally biased toward polar residues: residues 362 to 373 (YNSTANFKTWDP) and 402 to 424 (TRTQHFPPTQPYFITNSKTEVTV).

Belongs to the shisa family. SHISA9 subfamily. As to quaternary structure, component of some AMPA receptors (ionotropic glutamate receptors) complex, at least composed of some AMPA receptor (GRIA1, GRIA2 and/or GRIA3), CACNG2 and SHISA9, as well as low level of DLG4. In terms of tissue distribution, brain-specific. Mainly expressed in neurons, including in hippocampus, cerebral cortex, striatum, thalamus, olfactory bulb and cerebellum. Expressed in most brain structures during embryonic and postnatal development.

It localises to the cell projection. The protein localises to the dendritic spine membrane. The protein resides in the synapse. Its function is as follows. Regulator of short-term neuronal synaptic plasticity in the dentate gyrus. Associates with AMPA receptors (ionotropic glutamate receptors) in synaptic spines and promotes AMPA receptor desensitization at excitatory synapses. In Mus musculus (Mouse), this protein is Protein shisa-9 (Shisa9).